A 622-amino-acid chain; its full sequence is Glucose 1,6-bisphosphate synthase (622 aa).

Positions 73 and 175 each coordinate alpha-D-glucose 1,6-bisphosphate. Ser-175 serves as the catalytic Phosphoserine intermediate. Ser-175, Asp-332, and Asp-334 together coordinate Mg(2+). Ser-175 is subject to Phosphoserine. Alpha-D-glucose 1,6-bisphosphate-binding residues include Asp-336, Arg-337, Glu-434, Ser-436, and Lys-448.

Belongs to the phosphohexose mutase family.

Its subcellular location is the cytoplasm. The protein localises to the cytosol. The enzyme catalyses (2R)-3-phospho-glyceroyl phosphate + alpha-D-glucose 1-phosphate = alpha-D-glucose 1,6-bisphosphate + (2R)-3-phosphoglycerate + H(+). It carries out the reaction alpha-D-glucose 6-phosphate + (2R)-3-phospho-glyceroyl phosphate = alpha-D-glucose 1,6-bisphosphate + (2R)-3-phosphoglycerate + H(+). It catalyses the reaction (2R)-3-phospho-glyceroyl phosphate + alpha-D-ribose 1-phosphate = alpha-D-ribose 1,5-bisphosphate + (2R)-3-phosphoglycerate + H(+). The catalysed reaction is 2-deoxy-alpha-D-ribose 1-phosphate + (2R)-3-phospho-glyceroyl phosphate = 2-deoxy-alpha-D-ribose 1,5-bisphosphate + (2R)-3-phosphoglycerate + H(+). The enzyme catalyses (2R)-3-phospho-glyceroyl phosphate + alpha-D-mannose 1-phosphate = alpha-D-mannose 1,6-bisphosphate + (2R)-3-phosphoglycerate + H(+). In terms of biological role, glucose 1,6-bisphosphate synthase using 1,3-bisphosphoglycerate as a phosphate donor and a series of 1-phosphate sugars, including glucose 1-phosphate, mannose 1-phosphate, ribose 1-phosphate and deoxyribose 1-phosphate, as acceptors. In vitro, also exhibits very low phosphopentomutase and phosphoglucomutase activity which are most probably not physiologically relevant. The polypeptide is Glucose 1,6-bisphosphate synthase (Homo sapiens (Human)).